Here is a 170-residue protein sequence, read N- to C-terminus: ATP synthase subunit b (170 aa).

The chain crosses the membrane as a helical span at residues 22–41 (ILNWAVVVFGLYKFLPGFLG). Positions 76-98 (LSSAAEKASQIKADSLKRSESIR) are disordered. Residues 89 to 98 (DSLKRSESIR) show a composition bias toward basic and acidic residues.

This sequence belongs to the ATPase B chain family. F-type ATPases have 2 components, F(1) - the catalytic core - and F(0) - the membrane proton channel. F(1) has five subunits: alpha(3), beta(3), gamma(1), delta(1), epsilon(1). F(0) has four main subunits: a(1), b(1), b'(1) and c(10-14). The alpha and beta chains form an alternating ring which encloses part of the gamma chain. F(1) is attached to F(0) by a central stalk formed by the gamma and epsilon chains, while a peripheral stalk is formed by the delta, b and b' chains.

The protein resides in the cellular thylakoid membrane. In terms of biological role, f(1)F(0) ATP synthase produces ATP from ADP in the presence of a proton or sodium gradient. F-type ATPases consist of two structural domains, F(1) containing the extramembraneous catalytic core and F(0) containing the membrane proton channel, linked together by a central stalk and a peripheral stalk. During catalysis, ATP synthesis in the catalytic domain of F(1) is coupled via a rotary mechanism of the central stalk subunits to proton translocation. Functionally, component of the F(0) channel, it forms part of the peripheral stalk, linking F(1) to F(0). The protein is ATP synthase subunit b of Prochlorococcus marinus (strain AS9601).